A 363-amino-acid polypeptide reads, in one-letter code: Isopentenyl-diphosphate delta-isomerase (363 aa).

7-8 (RK) is a substrate binding site. Residues 71-73 (AMT), Ser101, and Asn130 each bind FMN. Gln160 contributes to the substrate binding site. Glu161 contributes to the Mg(2+) binding site. FMN-binding positions include Lys192, Ser217, Thr222, 270–272 (GIR), and 291–292 (AG).

The protein belongs to the IPP isomerase type 2 family. As to quaternary structure, homooctamer. Dimer of tetramers. FMN serves as cofactor. NADPH is required as a cofactor. Requires Mg(2+) as cofactor.

Its subcellular location is the cytoplasm. It catalyses the reaction isopentenyl diphosphate = dimethylallyl diphosphate. In terms of biological role, involved in the biosynthesis of isoprenoids. Catalyzes the 1,3-allylic rearrangement of the homoallylic substrate isopentenyl (IPP) to its allylic isomer, dimethylallyl diphosphate (DMAPP). The chain is Isopentenyl-diphosphate delta-isomerase from Symbiobacterium thermophilum (strain DSM 24528 / JCM 14929 / IAM 14863 / T).